Reading from the N-terminus, the 876-residue chain is Exosome complex component 10 homolog (876 aa).

Residues methionine 1–isoleucine 22 form a disordered region. In terms of domain architecture, 3'-5' exonuclease spans threonine 279–leucine 445. Residues aspartate 303, glutamate 305, aspartate 361, and aspartate 430 each contribute to the Mg(2+) site. The HRDC domain occupies asparagine 489–lysine 569. 3 stretches are compositionally biased toward basic and acidic residues: residues glutamate 690–alanine 730, valine 741–glutamate 752, and lysine 834–histidine 847. A disordered region spans residues glutamate 690 to lysine 876. Over residues glutamine 848–alanine 861 the composition is skewed to basic residues.

Belongs to the exosome component 10/RRP6 family. As to quaternary structure, component of the RNA exosome complex. Interacts with crn-5. Mg(2+) is required as a cofactor. Ubiquitously expressed.

Its subcellular location is the nucleus. The protein resides in the nucleolus. The protein localises to the nucleoplasm. Functionally, catalytic component of the RNA exosome complex which has 3'-&gt;5' exoribonuclease activity and participates in a multitude of cellular RNA processing and degradation events. Involved in apoptotic DNA degradation. Involved in regulation of antisense ribosomal siRNA production. Involved in response to cold-warm shock. This chain is Exosome complex component 10 homolog, found in Caenorhabditis elegans.